The sequence spans 94 residues: TTEEVPLNPEPRTECDSDNCAAGERPYAPNIAIENGDTIIAIGVVADVMFVIDXNCPLYCNFCIVADVMFVIDLVYEVGSFEALQQAIDNIMFT.

In terms of assembly, homodimer. Ubiquitous (at protein level). Highest levels of expression in crystalline style followed by digestive gland and mantle.

Strongly inhibited by the serine proteinase inhibitor AEBSF. Weakly inhibited by the proteinase inhibitors BSF and aprotinin, and by EDTA. Not inhibited by the proteinase inhibitors bestatin, E-64 and leupeptin. Hydrolysis of sulfocarbamoyl esters of paralytic shellfish toxins. Does not hydrolyze the carbamoyl esters of paralytic shellfish toxins. Ester hydrolysis is significantly affected by the stereochemistry of sulfate esters at C-11 of the substrate toxin. This is Sulfocarbamoylase-1 from Megangulus venulosus (Japanese bivalve).